The following is a 725-amino-acid chain: mRNA decay activator protein ZFP36L3 (725 aa).

Over residues 1–25 (MANNNLNRPLNTNVADSSNSSSTPG) the composition is skewed to low complexity. A disordered region spans residues 1–119 (MANNNLNRPL…KVSGSSSLAT (119 aa)). Polar residues-rich tracts occupy residues 42-72 (APSSSASSLTEDCSSSFARDLNSYNNGQSGA) and 100-119 (HSLQQKPKPQKVSGSSSLAT). 2 consecutive C3H1-type zinc fingers follow at residues 122–150 (RYKTELCRPFEESGICKYGHKCQFAHGYR) and 160–188 (KYKTEPCRTFHSVGFCPYGTRCHFIHNQP). The segment at 193–711 (VLSESTLEEP…ESEFDNTNSS (519 aa)) is necessary for cytoplasmic localization. The segment at 276–310 (STTAHDADKDPDKDADKDPSNNSANDALAFPQEPG) is disordered. Positions 280–294 (HDADKDPDKDADKDP) are enriched in basic and acidic residues. 4 consecutive transmembrane segments (helical) span residues 380–400 (LAPAAALTPAAALAPGAAMAL), 420–440 (AALALGAAMAAGAALAPGAAM), 441–461 (APGAAMATGAALAFGAAMATG), and 468–488 (AAMALGAAMATGAALAPGAAV). Residues 686 to 709 (DEDDFLRRSSSSSSLNESEFDNTN) form a disordered region. Residues 693 to 702 (RSSSSSSLNE) show a composition bias toward low complexity.

In terms of tissue distribution, expressed in placenta and extraembryonic tissues (at protein level). Not detected in embryos and fetus.

The protein localises to the cytoplasm. The protein resides in the membrane. In terms of biological role, placenta-specific zinc-finger RNA-binding protein that destabilizes cytoplasmic AU-rich element (ARE)-containing mRNA transcripts by promoting their poly(A) tail removal or deadenylation, and hence provide a mechanism for attenuating protein synthesis. Binds to the 3'-UTR ARE of placental target mRNAs, such as TNF, HBEGF and LIPG. Involved in placental expression of many genes important for normal placental physiology. In Mus musculus (Mouse), this protein is mRNA decay activator protein ZFP36L3.